The primary structure comprises 203 residues: Ras-related protein Rab5A (203 aa).

18–26 (GDVGTGKSS) is a GTP binding site. An Effector region motif is present at residues 40–48 (QESTIGAAF). GTP is bound by residues 66–70 (DTAGQ), 124–127 (NKAD), and 154–155 (SA). S-geranylgeranyl cysteine attachment occurs at residues Cys-201 and Cys-202.

Belongs to the small GTPase superfamily. Rab family. As to quaternary structure, interacts with VPS9A. Interacts with NSF and RBP-L. Highly expressed in roots. Expressed at low levels in shoots, flowers and grains.

The protein localises to the prevacuolar compartment membrane. Its subcellular location is the golgi apparatus membrane. The protein resides in the cell membrane. It localises to the protein storage vacuole membrane. Functionally, plays an important role in intracellular trafficking of seed storage proteins to the protein storage vacuoles (PSVs). Participates in the transport of the proglutelins from the Golgi apparatus to the PSVs in endosperm. Functions cooperatively with VPS9A to regulate post-Golgi dense vesicle-mediated transport of storage proteins to the type II protein bodies (PBII) protein storage vacuoles in developing endosperm. Involved in the maintenance of the general structural organization of the endomembrane system in developing endosperm. Binds GTP in vitro. Forms a quaternary complex with the two glutelin zipcode RNA-binding proteins RBP-L and RBP-P, and the membrane trafficking factor NSF. This quaternay complex carries glutelin mRNAs for active transport on endosomes to the cortical endoplasmic reticulum membrane, and enables endosome-mediated glutelin mRNA transport in endosperm cells. In Oryza sativa subsp. japonica (Rice), this protein is Ras-related protein Rab5A.